The chain runs to 96 residues: Small ribosomal subunit protein uS19 (96 aa).

This sequence belongs to the universal ribosomal protein uS19 family.

Functionally, protein S19 forms a complex with S13 that binds strongly to the 16S ribosomal RNA. The chain is Small ribosomal subunit protein uS19 from Solibacter usitatus (strain Ellin6076).